The following is a 326-amino-acid chain: tRNA-modifying protein YgfZ (326 aa).

Folate-binding residues include W27 and W189.

This sequence belongs to the tRNA-modifying YgfZ family.

The protein localises to the cytoplasm. Folate-binding protein involved in regulating the level of ATP-DnaA and in the modification of some tRNAs. It is probably a key factor in regulatory networks that act via tRNA modification, such as initiation of chromosomal replication. The polypeptide is tRNA-modifying protein YgfZ (Escherichia coli O127:H6 (strain E2348/69 / EPEC)).